Here is a 414-residue protein sequence, read N- to C-terminus: Sex comb on midleg-like protein 4 (414 aa).

A phosphoserine mark is found at S55 and S65. The span at 257-276 (HRGSLHPSSSLYCKRQNSGD) shows a compositional bias: polar residues. Residues 257–343 (HRGSLHPSSS…DARRPRSRNP (87 aa)) are disordered. Positions 284–304 (AATAGGPRTSPMSSGGPSAPG) are enriched in low complexity. The SAM domain maps to 288–354 (GGPRTSPMSS…AWTVEDVVWF (67 aa)). Residues 312–332 (PKRNTTSLEGNRCASSPSQDA) show a composition bias toward polar residues.

It belongs to the SCM family.

It localises to the nucleus. Its function is as follows. Putative Polycomb group (PcG) protein. PcG proteins act by forming multiprotein complexes, which are required to maintain the transcriptionally repressive state of homeotic genes throughout development. This Homo sapiens (Human) protein is Sex comb on midleg-like protein 4 (SCML4).